Consider the following 386-residue polypeptide: Porin PorA (386 aa).

The first 35 residues, 1–35, serve as a signal peptide directing secretion; it reads MKRTLGHALIIIGAALIVIAVLLPTFLVPRLRVIP. Over residues 53 to 63 the composition is skewed to polar residues; sequence DSSQLGKNEPT. Residues 53–78 are disordered; it reads DSSQLGKNEPTPNRKNDPRCKAETDE. Residues 64–78 show a composition bias toward basic and acidic residues; the sequence is PNRKNDPRCKAETDE.

Belongs to the PorA family.

The protein resides in the secreted. The protein localises to the cell wall. Forms water-filled channels that favor the permeation of cations. In Corynebacterium amycolatum, this protein is Porin PorA.